A 380-amino-acid polypeptide reads, in one-letter code: ATPase ASNA1 homolog (380 aa).

Residue 48-55 coordinates ATP; it reads KGGVGKTT. Asp77 is a catalytic residue. The ATP site is built by Glu248 and Asn275.

The protein belongs to the arsA ATPase family. In terms of assembly, homodimer.

Its subcellular location is the cytoplasm. The protein localises to the endoplasmic reticulum. In terms of biological role, ATPase required for the post-translational delivery of tail-anchored (TA) proteins to the endoplasmic reticulum. Recognizes and selectively binds the transmembrane domain of TA proteins in the cytosol. This complex then targets to the endoplasmic reticulum by membrane-bound receptors, where the tail-anchored protein is released for insertion. This process is regulated by ATP binding and hydrolysis. ATP binding drives the homodimer towards the closed dimer state, facilitating recognition of newly synthesized TA membrane proteins. ATP hydrolysis is required for insertion. Subsequently, the homodimer reverts towards the open dimer state, lowering its affinity for the membrane-bound receptor, and returning it to the cytosol to initiate a new round of targeting. The chain is ATPase ASNA1 homolog from Plasmodium yoelii yoelii.